Here is a 413-residue protein sequence, read N- to C-terminus: Heparan-sulfate 6-O-sulfotransferase 1-A (413 aa).

Residues 9–15 lie on the Cytoplasmic side of the membrane; the sequence is MVERSSK. A helical; Signal-anchor for type II membrane protein transmembrane segment spans residues 16–36; sequence FLFIVVGSVLFMLILYQYVAP. Residues 37-413 lie on the Lumenal side of the membrane; sequence GMMNFGSPHG…DYMNHIINRW (377 aa). 92-100 provides a ligand contact to 3'-phosphoadenylyl sulfate; it reads HIQKTGGTT. Substrate-binding positions include 122–123, Arg-139, Trp-144, and His-149; that span reads KK. His-149 functions as the Proton acceptor in the catalytic mechanism. Residues Arg-183 and Ser-191 each contribute to the 3'-phosphoadenylyl sulfate site. Positions 195 and 202 each coordinate substrate. Residue Asn-262 is glycosylated (N-linked (GlcNAc...) asparagine). 315 to 317 provides a ligand contact to 3'-phosphoadenylyl sulfate; sequence MQY. Asn-318 carries N-linked (GlcNAc...) asparagine glycosylation. Position 321–322 (321–322) interacts with 3'-phosphoadenylyl sulfate; it reads RA. Asn-329 carries N-linked (GlcNAc...) asparagine glycosylation. The disordered stretch occupies residues 374–401; it reads PLFPFRRTSSSDSTFRDDAPESEGSRLP.

Belongs to the sulfotransferase 6 family. During somitogenesis, first expressed in polster and presumptive forebrain. During mid-somitogenesis, expressed in eye, hindbrain and anterior spinal cord. During late somitogenesis, strong expression in eye and hindbrain, decreased levels in midbrain and anterior spinal cord. At 24 hours post-fertilization (hpf), expressed in neural retina and lens, brain and anterior spinal cord. At 36 hpf, retinal expression is confined to the ciliary marginal zone and there is strong expression in tectum, rhombomeres and otic vesicle. At 48 hpf, expressed in retinal ganglion cells and in tectum, rhombomeres and pectoral fin. Not detected in the vasculature during embryogenesis.

The protein localises to the membrane. The enzyme catalyses alpha-D-glucosaminyl-[heparan sulfate](n) + 3'-phosphoadenylyl sulfate = 6-sulfo-alpha-D-glucosaminyl-[heparan sulfate](n) + adenosine 3',5'-bisphosphate + H(+). In terms of biological role, 6-O-sulfation enzyme which catalyzes the transfer of sulfate from 3'-phosphoadenosine 5'-phosphosulfate (PAPS) to position 6 of the N-sulfoglucosamine residue (GlcNS) of heparan sulfate. The protein is Heparan-sulfate 6-O-sulfotransferase 1-A of Danio rerio (Zebrafish).